We begin with the raw amino-acid sequence, 142 residues long: Small heat shock protein IbpB (142 aa).

Residues 26–137 (SGESQSFPPY…PPQRIAINER (112 aa)) form the sHSP domain.

Belongs to the small heat shock protein (HSP20) family. Homodimer. Forms homomultimers of about 100-150 subunits at optimal growth temperatures. Conformation changes to oligomers at high temperatures or high ionic concentrations. The decrease in size of the multimers is accompanied by an increase in chaperone activity.

It is found in the cytoplasm. Associates with aggregated proteins, together with IbpA, to stabilize and protect them from irreversible denaturation and extensive proteolysis during heat shock and oxidative stress. Aggregated proteins bound to the IbpAB complex are more efficiently refolded and reactivated by the ATP-dependent chaperone systems ClpB and DnaK/DnaJ/GrpE. Its activity is ATP-independent. This chain is Small heat shock protein IbpB, found in Salmonella typhi.